A 741-amino-acid polypeptide reads, in one-letter code: MKILRQLWNQKGLDAAVEDVPEDRYGFGNIAENISRSILTLPLEASNVVGIEGAWGSGKTSLLNLILRNLALKKDAHTHVLHISPWLSGGSPVEALFLPVATVIQQEMEIRYPPKGFKKLWRKYLLSPEAQKVIEYAQDTSSRVLPLVQYIGQFSSIINWIAGGIKVFSDSRLAVDQKTTTKLRAEIAGQLVSLDLKFIVVMDDLDRLEPSQVAEVFRLVRAVADLPRFTHILCYDRQIITHAVEHALNIEDGSRYLQKIIQLSFKLPRPEAFDLRNEFRQRAEALYQQINNQPPDSGMVRDLIAVTDTYGAALSTPREIHQAINSLIFLYPGMRDFVYFPDLCLLQLIRVTNPALYDWTEHYLTERSVIETGQGMLSDGEKADFREGLIRCMKTFRASNADSFLTLADWIPGISGHNDEYLNLFEPVSEDFRHIQTTGKRLSSLTHWRYYFAFSSPQNVLPPEFFRQLFEQAGVSEKQQQLSELLLSKINSVGSLSGTWFEHILSRLTPGLIRERNFEECAGLVHFFFDHTDEVSTRFSIRNPWFSLREMAINEVVRHLLKHMQDIDETRTITLMEKLIVTGASPFWIADFMRDLIWEHGLAQNAVPSPSDALFSRDITERLRDRFAERMNQPELQQQLLLRKSLLGYLYAWRDMSSGETVKQWVREVTTTDEGLVNLLIRLQTSVFSSHRGAYRRIARDQVSPFFDDWPAVEEKLKVMLSGNELTPEQEALKTALENDD.

Residues 27 to 334 (FGNIAENISR…NSLIFLYPGM (308 aa)) form the KAP NTPase domain.

Functionally, responsible for the exclusion of phage T7 by plasmid F. Growth of bacteriophage T7 is inhibited in cells of E.coli that carries the plasmid F. The chain is Phage T7 exclusion protein (pifA) from Escherichia coli (strain K12).